A 293-amino-acid chain; its full sequence is Sphingolipid C4-hydroxylase sur2 (293 aa).

Helical transmembrane passes span 18-38, 68-88, and 127-147; these read LVSP…LHYI, AVLF…MFEG, and FIVP…WQYF. Residues 136–270 enclose the Fatty acid hydroxylase domain; the sequence is FAFFIIDSWQ…FTFWDHVLGT (135 aa).

The protein belongs to the sterol desaturase family.

The protein resides in the endoplasmic reticulum membrane. It functions in the pathway membrane lipid metabolism; sphingolipid biosynthesis. Required for hydroxylation of C-4 in the sphingoid moiety of ceramide. Involved in the response to syringomycin. The protein is Sphingolipid C4-hydroxylase sur2 (sur2) of Schizosaccharomyces pombe (strain 972 / ATCC 24843) (Fission yeast).